The primary structure comprises 130 residues: Small ribosomal subunit protein uS11 (130 aa).

It belongs to the universal ribosomal protein uS11 family. Part of the 30S ribosomal subunit. Interacts with proteins S7 and S18. Binds to IF-3.

Functionally, located on the platform of the 30S subunit, it bridges several disparate RNA helices of the 16S rRNA. Forms part of the Shine-Dalgarno cleft in the 70S ribosome. The polypeptide is Small ribosomal subunit protein uS11 (Prochlorococcus marinus (strain NATL2A)).